The primary structure comprises 447 residues: UDP-N-acetylmuramate--L-alanine ligase (447 aa).

ATP is bound at residue 108 to 114 (GSHGKTS).

Belongs to the MurCDEF family.

The protein localises to the cytoplasm. It carries out the reaction UDP-N-acetyl-alpha-D-muramate + L-alanine + ATP = UDP-N-acetyl-alpha-D-muramoyl-L-alanine + ADP + phosphate + H(+). The protein operates within cell wall biogenesis; peptidoglycan biosynthesis. Functionally, cell wall formation. The chain is UDP-N-acetylmuramate--L-alanine ligase from Listeria monocytogenes serotype 4b (strain F2365).